The chain runs to 513 residues: ATP synthase subunit alpha (513 aa).

Residue 169–176 (GDRQTGKT) participates in ATP binding.

Belongs to the ATPase alpha/beta chains family. As to quaternary structure, F-type ATPases have 2 components, CF(1) - the catalytic core - and CF(0) - the membrane proton channel. CF(1) has five subunits: alpha(3), beta(3), gamma(1), delta(1), epsilon(1). CF(0) has three main subunits: a(1), b(2) and c(9-12). The alpha and beta chains form an alternating ring which encloses part of the gamma chain. CF(1) is attached to CF(0) by a central stalk formed by the gamma and epsilon chains, while a peripheral stalk is formed by the delta and b chains.

The protein localises to the cell inner membrane. The enzyme catalyses ATP + H2O + 4 H(+)(in) = ADP + phosphate + 5 H(+)(out). In terms of biological role, produces ATP from ADP in the presence of a proton gradient across the membrane. The alpha chain is a regulatory subunit. The sequence is that of ATP synthase subunit alpha from Shewanella loihica (strain ATCC BAA-1088 / PV-4).